We begin with the raw amino-acid sequence, 363 residues long: Carbamoyl phosphate synthase small chain (363 aa).

Residues 1 to 171 form a CPSase region; sequence MEDGTLFAGA…PYRIPGPGPR (171 aa). 3 residues coordinate L-glutamine: S39, G219, and G221. Residues 171-359 enclose the Glutamine amidotransferase type-1 domain; the sequence is RVVAVDFGAK…LALVDRSAVS (189 aa). The active-site Nucleophile is C248. Positions 249, 252, 290, 292, and 293 each coordinate L-glutamine. Residues H332 and E334 contribute to the active site.

This sequence belongs to the CarA family. In terms of assembly, composed of two chains; the small (or glutamine) chain promotes the hydrolysis of glutamine to ammonia, which is used by the large (or ammonia) chain to synthesize carbamoyl phosphate. Tetramer of heterodimers (alpha,beta)4.

It catalyses the reaction hydrogencarbonate + L-glutamine + 2 ATP + H2O = carbamoyl phosphate + L-glutamate + 2 ADP + phosphate + 2 H(+). The enzyme catalyses L-glutamine + H2O = L-glutamate + NH4(+). Its pathway is amino-acid biosynthesis; L-arginine biosynthesis; carbamoyl phosphate from bicarbonate: step 1/1. It participates in pyrimidine metabolism; UMP biosynthesis via de novo pathway; (S)-dihydroorotate from bicarbonate: step 1/3. Its function is as follows. Small subunit of the glutamine-dependent carbamoyl phosphate synthetase (CPSase). CPSase catalyzes the formation of carbamoyl phosphate from the ammonia moiety of glutamine, carbonate, and phosphate donated by ATP, constituting the first step of 2 biosynthetic pathways, one leading to arginine and/or urea and the other to pyrimidine nucleotides. The small subunit (glutamine amidotransferase) binds and cleaves glutamine to supply the large subunit with the substrate ammonia. This is Carbamoyl phosphate synthase small chain from Symbiobacterium thermophilum (strain DSM 24528 / JCM 14929 / IAM 14863 / T).